The following is a 404-amino-acid chain: Probable protein phosphatase 1N (404 aa).

In terms of domain architecture, PPM-type phosphatase spans 59–319 (RFGASAVQGW…DNMTCMVVCF (261 aa)). Residues D96, G97, D267, and D310 each contribute to the Mn(2+) site.

The protein belongs to the PP2C family. Mg(2+) is required as a cofactor. It depends on Mn(2+) as a cofactor.

The catalysed reaction is O-phospho-L-seryl-[protein] + H2O = L-seryl-[protein] + phosphate. It carries out the reaction O-phospho-L-threonyl-[protein] + H2O = L-threonyl-[protein] + phosphate. The polypeptide is Probable protein phosphatase 1N (Ppm1n) (Mus musculus (Mouse)).